Consider the following 743-residue polypeptide: Threonine synthase-like 1 (743 aa).

K281 is subject to N6-acetyllysine. K351 carries the N6-(pyridoxal phosphate)lysine modification.

This sequence belongs to the threonine synthase family. Pyridoxal 5'-phosphate is required as a cofactor.

The sequence is that of Threonine synthase-like 1 (THNSL1) from Homo sapiens (Human).